The chain runs to 352 residues: uncharacterized protein (352 aa).

Positions 1–22 (MAIYLDKLKMPIIIGLIVLIIA) are cleaved as a signal peptide.

The protein belongs to the bacterial solute-binding protein 1 family. WtpA subfamily.

This is an uncharacterized protein from Staphylothermus marinus (strain ATCC 43588 / DSM 3639 / JCM 9404 / F1).